A 1733-amino-acid polypeptide reads, in one-letter code: DNA-directed RNA polymerase II subunit RPB1 (1733 aa).

The Zn(2+) site is built by Cys67, Cys70, Cys77, His80, Cys107, Cys110, Cys148, and Cys167. Positions 248-260 (PSISFNESQRGED) are lid loop. Residues 306–323 (NDIAGQPQALQKSGRPVK) are rudder loop. 3 residues coordinate Mg(2+): Asp481, Asp483, and Asp485. Lys695 is covalently cross-linked (Glycyl lysine isopeptide (Lys-Gly) (interchain with G-Cter in ubiquitin)). Residues 810 to 822 (PQEFFFHAMGGRE) form a bridging helix region. Residues Lys1246 and Lys1350 each participate in a glycyl lysine isopeptide (Lys-Gly) (interchain with G-Cter in ubiquitin) cross-link. Thr1471 carries the phosphothreonine modification. Residues 1537-1733 (VSSPGFSPTS…QKHNENENSR (197 aa)) form a disordered region. The span at 1538–1719 (SSPGFSPTSP…YSPGSPAYSP (182 aa)) shows a compositional bias: low complexity. Tandem repeats lie at residues 1549-1555 (YSPTSPA), 1556-1562 (YSPTSPS), 1563-1569 (YSPTSPS), 1570-1576 (YSPTSPS), 1577-1583 (YSPTSPS), 1584-1590 (YSPTSPS), 1591-1597 (YSPTSPS), 1598-1604 (YSPTSPS), 1605-1611 (YSPTSPS), 1612-1618 (YSPTSPS), 1619-1625 (YSPTSPS), 1626-1632 (YSPTSPS), 1633-1639 (YSPTSPS), 1640-1646 (YSPTSPS), 1647-1653 (YSPTSPS), 1654-1660 (YSPTSPA), 1661-1667 (YSPTSPS), 1668-1674 (YSPTSPS), 1675-1681 (YSPTSPS), 1682-1688 (YSPTSPS), 1689-1695 (YSPTSPN), 1696-1702 (YSPTSPS), and 1703-1709 (YSPTSPG). Positions 1549 to 1716 (YSPTSPAYSP…SPGYSPGSPA (168 aa)) are C-terminal domain (CTD); 24 X 7 AA approximate tandem repeats of Y-S-P-T-S-P-[A-S-N-G]. One copy of the 24; approximate repeat lies at 1710–1716 (YSPGSPA). Basic and acidic residues predominate over residues 1720–1733 (KQDEQKHNENENSR).

The protein belongs to the RNA polymerase beta' chain family. As to quaternary structure, component of the RNA polymerase II (Pol II) complex consisting of 12 subunits. Interacts with DEF1; the interaction is direct and serves to bridge RPB1 to the Elongin complex in a DNA-damaged dependent manner. Interacts with the Elongin subunit ELA1. Interacts with the Elongin subunit ELC1. Interacts with ASK10. Interacts with ESS1. Interacts with RTT103. Interacts with SHE2. In terms of processing, the tandem 7 residues repeats in the C-terminal domain (CTD) can be highly phosphorylated. The phosphorylation activates Pol II. Phosphorylation occurs mainly at residues 'Ser-2' and 'Ser-5' of the heptapeptide repeat. The phosphorylated form of Pol II appears to carry, on average, one phosphate per repeat. The phosphorylation state is believed to result from the balanced action of site-specific CTD kinases and phosphatases, and a 'CTD code' that specifies the position of Pol II within the transcription cycle has been proposed. Phosphorylation at 'Ser-5' occurs in promoter-proximal regions in early elongation. Phosphorylation at 'Ser-2' predominates in regions more distal to the promoter and triggers binding of the 3' RNA processing machinery. CTD kinases include KIN28 (as part of the TFKII complex, a subcomplex of the TFIIH holo complex), SSN3/SRB10 (as part of the SRB8-11 complex, a module of the Mediator complex), CTK1 (as part of CTD kinase), and probably BUR1 (as part of the BUR1-BUR2 kinase complex). Phosphatases include FCP1 and SSU72. Following transcription stress, the elongating form of RNA polymerase II (RNA pol IIo) is polyubiquitinated via 'Lys-63'-linkages on Lys-1246 by the RSP5-UBA1-UBC5 complex at DNA damage sites without leading to degradation: ubiquitination promotes RNA pol IIo backtracking to allow access by the transcription-coupled nucleotide excision repair (TC-NER) machinery. Subsequent DEF1-dependent polyubiquitination by the elongin complex via 'Lys-48'-linkages may lead to proteasome-mediated degradation; presumably at stalled RNA pol II where TC-NER has failed, to halt global transcription and enable 'last resort' DNA repair pathways.

Its subcellular location is the nucleus. The catalysed reaction is RNA(n) + a ribonucleoside 5'-triphosphate = RNA(n+1) + diphosphate. DNA-dependent RNA polymerase catalyzes the transcription of DNA into RNA using the four ribonucleoside triphosphates as substrates. Largest and catalytic component of RNA polymerase II which synthesizes mRNA precursors and many functional non-coding RNAs. Forms the polymerase active center together with the second largest subunit. Pol II is the central component of the basal RNA polymerase II transcription machinery. During a transcription cycle, Pol II, general transcription factors and the Mediator complex assemble as the preinitiation complex (PIC) at the promoter. 11-15 base pairs of DNA surrounding the transcription start site are melted and the single-stranded DNA template strand of the promoter is positioned deeply within the central active site cleft of Pol II to form the open complex. After synthesis of about 30 bases of RNA, Pol II releases its contacts with the core promoter and the rest of the transcription machinery (promoter clearance) and enters the stage of transcription elongation in which it moves on the template as the transcript elongates. Pol II appears to oscillate between inactive and active conformations at each step of nucleotide addition. Elongation is influenced by the phosphorylation status of the C-terminal domain (CTD) of Pol II largest subunit (RPB1), which serves as a platform for assembly of factors that regulate transcription initiation, elongation, termination and mRNA processing. Pol II is composed of mobile elements that move relative to each other. The core element with the central large cleft comprises RPB3, RBP10, RPB11, RPB12 and regions of RPB1 and RPB2 forming the active center. The clamp element (portions of RPB1, RPB2 and RPB3) is connected to the core through a set of flexible switches and moves to open and close the cleft. A bridging helix emanates from RPB1 and crosses the cleft near the catalytic site and is thought to promote translocation of Pol II by acting as a ratchet that moves the RNA-DNA hybrid through the active site by switching from straight to bent conformations at each step of nucleotide addition. In elongating Pol II, the lid loop (RPB1) appears to act as a wedge to drive apart the DNA and RNA strands at the upstream end of the transcription bubble and guide the RNA strand toward the RNA exit groove located near the base of the largely unstructured CTD domain of RPB1. The rudder loop (RPB1) interacts with single-stranded DNA after separation from the RNA strand, likely preventing reassociation with the exiting RNA. The cleft is surrounded by jaws: an upper jaw formed by portions of RBP1, RPB2 and RPB9, and a lower jaw, formed by RPB5 and portions of RBP1. The jaws are thought to grab the incoming DNA template, mainly by RPB5 direct contacts to DNA. This chain is DNA-directed RNA polymerase II subunit RPB1 (RPO21), found in Saccharomyces cerevisiae (strain ATCC 204508 / S288c) (Baker's yeast).